Reading from the N-terminus, the 122-residue chain is MESRIIEIDPNCVNEFEKLKKKYKIESIFLKLNDNFNLLYVEKTLSKISQDDFLESIPVDQPRLIIYKKYSNNKIIFIRWIPEIVQDTIEYSYSNASTAILELLIGINEYMEVKDLIQLSNL.

The 120-residue stretch at 3 to 122 (SRIIEIDPNC…VKDLIQLSNL (120 aa)) folds into the ADF-H domain.

The protein belongs to the actin-binding proteins ADF family.

It localises to the cytoplasm. Its subcellular location is the cytoskeleton. In terms of biological role, controls actin polymerization and depolymerization. The protein is Cofilin-5 (cofF) of Dictyostelium discoideum (Social amoeba).